The following is a 606-amino-acid chain: WD repeat-containing protein 1 (606 aa).

WD repeat units follow at residues 4–45 (EIKK…LRNI), 48–87 (PAIA…IWDT), 93–135 (LLKY…LWDS), 138–176 (SVGE…FFEG), 180–218 (KFKF…IYDG), 224–263 (VCAL…IWDV), 270–306 (NTFT…YLDK), 311–351 (KPLR…YWDS), 358–408 (SFAG…KLDV), 432–474 (LKDQ…LYSI), 480–518 (KDEG…VFSV), 523–561 (SENN…VWTL), and 566–604 (TRVK…EWTI). An N6-acetyllysine mark is found at lysine 28, lysine 81, lysine 95, and lysine 115. Residue tyrosine 238 is modified to Phosphotyrosine. Lysine 480 carries the post-translational modification N6-acetyllysine.

This sequence belongs to the WD repeat AIP1 family.

It localises to the cytoplasm. It is found in the cytoskeleton. Its subcellular location is the cell projection. The protein localises to the podosome. Its function is as follows. Induces disassembly of actin filaments in conjunction with ADF/cofilin family proteins. Enhances cofilin-mediated actin severing. Involved in cytokinesis. Involved in chemotactic cell migration by restricting lamellipodial membrane protrusions. Involved in myocardium sarcomere organization. Required for cardiomyocyte growth and maintenance. Involved in megakaryocyte maturation and platelet shedding. Required for the establishment of planar cell polarity (PCP) during follicular epithelium development and for cell shape changes during PCP; the function seems to implicate cooperation with CFL1 and/or DSTN/ADF. Involved in the generation/maintenance of cortical tension. Involved in assembly and maintenance of epithelial apical cell junctions and plays a role in the organization of the perijunctional actomyosin belt. The chain is WD repeat-containing protein 1 (WDR1) from Bos taurus (Bovine).